The following is a 153-amino-acid chain: uncharacterized protein (153 aa).

Residues 1–19 (MKACLLLFFYFSFICQLHG) form the signal peptide.

This is an uncharacterized protein from Escherichia coli (strain K12).